A 97-amino-acid chain; its full sequence is Small, acid-soluble spore protein gamma-type (97 aa).

The segment covering 1-42 (MAKQTNKTASGTSTQHVKQQNAQASKNNFGTEFGSETNVQEV) has biased composition (polar residues). Residues 1–97 (MAKQTNKTAS…KNQNSGKYQG (97 aa)) form a disordered region. 2 consecutive repeats follow at residues 23–56 (QASK…KSQN) and 58–91 (QASK…KNQN). Low complexity predominate over residues 43 to 63 (KQQNAQAAANKSQNAQASKNN). The span at 69-78 (ASETSAQEVR) shows a compositional bias: polar residues. Residues 79-91 (QQNAQAQAKKNQN) show a composition bias toward low complexity.

Belongs to the gamma-type SASP family.

Its function is as follows. SASP are proteins degraded in the first minutes of spore germination and provide amino acids for both new protein synthesis and metabolism. These proteins may be involved in dormant spore's high resistance to UV light. The polypeptide is Small, acid-soluble spore protein gamma-type (sasP-B) (Priestia megaterium (Bacillus megaterium)).